Reading from the N-terminus, the 686-residue chain is Protein SDA1 homolog (686 aa).

A phosphoserine mark is found at Ser232, Ser234, and Ser236. The stretch at Lys254–Met315 forms a coiled coil. The segment at Leu484 to Asp508 is disordered. Positions Thr490 to Asp508 are enriched in acidic residues. Position 551 is a phosphothreonine (Thr551). Residues Met563–Glu586 are disordered. Phosphoserine occurs at positions 584, 588, and 594. The segment at Lys604 to Asn649 is disordered.

This sequence belongs to the SDA1 family.

Its subcellular location is the nucleus. The protein resides in the nucleolus. In terms of biological role, required for 60S pre-ribosomal subunits export to the cytoplasm. This Rattus norvegicus (Rat) protein is Protein SDA1 homolog (Sdad1).